Reading from the N-terminus, the 267-residue chain is MIKIAVCGAAGRMGQRLINSVQEAEGVCLSGVLERPAHPLVGQDAGLVAGCGALGVSISDDLNAVIAGCDVLIDFTAPKVSLKNLEACGLQRKSIVIGSTGFTPEERQLAMELTRNISAILAPNMSVGVNVCFKILKDIAATLGDDFDVEIVESHHRMKVDAPSGTAVRMGQVVAEALGRDYDRVANFHREGITGSRTKDEIGMQTIRGGDIVGEHTVYFIGMGERIELSHRAMNRDMFSRGAVRAATWVVGQAPGLYDMQDVLGLK.

NAD(+) is bound by residues 8–13 (GAAGRM) and Glu-34. Position 35 (Arg-35) interacts with NADP(+). NAD(+) is bound by residues 98–100 (GST) and 122–125 (APNM). His-155 (proton donor/acceptor) is an active-site residue. His-156 serves as a coordination point for (S)-2,3,4,5-tetrahydrodipicolinate. Lys-159 (proton donor) is an active-site residue. 165-166 (GT) is a (S)-2,3,4,5-tetrahydrodipicolinate binding site.

The protein belongs to the DapB family.

It is found in the cytoplasm. The catalysed reaction is (S)-2,3,4,5-tetrahydrodipicolinate + NAD(+) + H2O = (2S,4S)-4-hydroxy-2,3,4,5-tetrahydrodipicolinate + NADH + H(+). It carries out the reaction (S)-2,3,4,5-tetrahydrodipicolinate + NADP(+) + H2O = (2S,4S)-4-hydroxy-2,3,4,5-tetrahydrodipicolinate + NADPH + H(+). It functions in the pathway amino-acid biosynthesis; L-lysine biosynthesis via DAP pathway; (S)-tetrahydrodipicolinate from L-aspartate: step 4/4. Catalyzes the conversion of 4-hydroxy-tetrahydrodipicolinate (HTPA) to tetrahydrodipicolinate. The protein is 4-hydroxy-tetrahydrodipicolinate reductase of Pelobacter propionicus (strain DSM 2379 / NBRC 103807 / OttBd1).